The sequence spans 935 residues: Dual 3',5'-cyclic-AMP and -GMP phosphodiesterase 11A (935 aa).

A disordered region spans residues 41 to 125; it reads RHSSGQGASD…ASQKELRKSF (85 aa). The span at 54 to 69 shows a compositional bias: low complexity; the sequence is ALAGASSLAQSSARGS. Phosphoserine occurs at positions 162, 163, and 239. GAF domains lie at 217–370 and 402–558; these read DLTS…GIAI and DLEK…GLGI. Ser-424 contributes to the 3',5'-cyclic GMP binding site. A PDEase domain is found at 588-912; sequence SKAEVDKFKA…RKWEELHQKR (325 aa). The active-site Proton donor is His-664. Positions 668, 704, 705, and 816 each coordinate a divalent metal cation. The disordered stretch occupies residues 915–935; that stretch reads VSAASPVPSSPSPAVAGEDRL.

The protein belongs to the cyclic nucleotide phosphodiesterase family. Requires a divalent metal cation as cofactor. In terms of tissue distribution, isoform 1 is expressed in brain, heart, kidney and liver, but not in prostate. Isoform 2 is specifically expressed in testis. Isoform 3 is expressed in various tissues including brain, lung, skeletal muscle, spleen, testis and prostate.

Its subcellular location is the cytoplasm. The protein localises to the cytosol. It carries out the reaction 3',5'-cyclic GMP + H2O = GMP + H(+). It catalyses the reaction 3',5'-cyclic AMP + H2O = AMP + H(+). Its activity is regulated as follows. Inhibited by 3-isobutyl-1-methylxanthine (IBMX), zaprinast and dipyridamole. cGMP acts as an allosteric activator. Functionally, plays a role in signal transduction by regulating the intracellular concentration of cyclic nucleotides cAMP and cGMP. Catalyzes the hydrolysis of both cAMP and cGMP to 5'-AMP and 5'-GMP, respectively. This Rattus norvegicus (Rat) protein is Dual 3',5'-cyclic-AMP and -GMP phosphodiesterase 11A.